Here is a 184-residue protein sequence, read N- to C-terminus: Endoribonuclease YbeY (184 aa).

3 residues coordinate Zn(2+): histidine 151, histidine 155, and histidine 161.

Belongs to the endoribonuclease YbeY family. The cofactor is Zn(2+).

Its subcellular location is the cytoplasm. In terms of biological role, single strand-specific metallo-endoribonuclease involved in late-stage 70S ribosome quality control and in maturation of the 3' terminus of the 16S rRNA. The sequence is that of Endoribonuclease YbeY from Prochlorococcus marinus (strain NATL2A).